Here is a 349-residue protein sequence, read N- to C-terminus: Shematrin-like protein 1 (349 aa).

A signal peptide spans 1-16 (MLKLVCAVFLIATVSA).

In terms of tissue distribution, prismatic layer of shell (at protein level).

It is found in the secreted. The protein is Shematrin-like protein 1 of Margaritifera margaritifera (Freshwater pearl mussel).